The primary structure comprises 297 residues: MNRTGDDETLSTQVKAEVLAEALPWLKQLHGKVVVVKYSGNAMTDDMLRRAFAADMAFLRNCGIHPVVVHGGGPQITAMLRRLGIADDFKGGFRVTTPEVLDVARMVLFGQVGRELVNLINAHGPYAVGITGEDAQLFTAGRRSATVDGMATDIGLVGDVDQVNIAAVLDLISAHRIPVVSTLAPDRDGVVHNINADTAAAALAETLGAEKLLMLTNVEGLYTRWPERDSLVNEIDSAALAQLLPTLEAGMIPKVEACLRAVTGGVPSAHVIDGRVKHCVLVELLTNEGTGTKVVSA.

Residues 72 to 73, R94, and N193 contribute to the substrate site; that span reads GG.

It belongs to the acetylglutamate kinase family. ArgB subfamily.

It localises to the cytoplasm. It carries out the reaction N-acetyl-L-glutamate + ATP = N-acetyl-L-glutamyl 5-phosphate + ADP. Its pathway is amino-acid biosynthesis; L-arginine biosynthesis; N(2)-acetyl-L-ornithine from L-glutamate: step 2/4. Its function is as follows. Catalyzes the ATP-dependent phosphorylation of N-acetyl-L-glutamate. The polypeptide is Acetylglutamate kinase (Mycobacterium leprae (strain TN)).